Reading from the N-terminus, the 944-residue chain is MGRRLKFLQKLAFLGQNHRYKALERDEVETLIDEQCELKAIEREKTVAALPPGEACKCSREELARAFHVDLDSGLSEFAVAQRRLVHGWNEFVTDNAEPVWKKYLDQFRNPLILLLLGSSVVSVLTKEYEDAVSIALAVLIVVTVGFIQEYRSEKSLEELTKLVPPECNCLRDGKLRHMLARDLVPGDIVSLSMGDRIPADIRLTEVTDLLVDESSFTGEVEPCGKTDSPLADGGDLSTLSNVVFMGTLVQCGKGQGVVIGTGEQSQFGEVFKMMRAEETPKTPLQKSMDKLGKQLTIFSFGIIGLLMLVGWVQGKPFLSMFTVGVSLAVAAIPEGLPIVVMVTLVLGVLRMAKKRVIVKKLPIVETLGCCNVICSDKTGTLTANEMTATQLVTSDGFHAEVSGVGYSGEGTVCLLPSKEVIKGFDNVSVGKLVEAGCVANNAVIRKNAVMGQPTEGALVVLAMKMNLGSIKDSYVRKKEIPFSSEQKWMAVRCGPKSEDGEDIYFMKGAFEEVIHHCSMYNNGGIPLPLTPQQKSYCQQEEKKMGSLGLRVLALASGPELGRLTFLGLVGIIDPPRAGVKEAVQVLSESGVSVKMVTGDALETALAIGRTIGLCNEKLKAMSGEEVEGTEQGALAARVRQVSVFFRTSPKHKVKIIKALQESGAIVAMTGDGVNDSVALKSADIGIAMGQTGTDVSKEAANMILVDDDFSAIMSAVEEGKGIFYNIKNFVRFQLSTSIAALSLITLSTVCNLPSPLNAMQILWVNIIMDGPPAQSLGVEPVDRDALRRPPRSVGDTILNRALILRVLMSAAVIIGGTLFIFWREIPANGTSTPRTTTMAFTCFVFFDLFNALSCRSQTKLIFEIGFFRNRMFLYSVLGSLLGQLAVIYAPPLQKVFQTENLSALDLLLLTGLASSVFILSELLKLWEKFLSRARPTQMLPEAV.

At 1 to 104 (MGRRLKFLQK…DNAEPVWKKY (104 aa)) the chain is on the cytoplasmic side. Positions 69 to 93 (VDLDSGLSEFAVAQRRLVHGWNEFV) are interaction with ORAI1. A helical transmembrane segment spans residues 105–125 (LDQFRNPLILLLLGSSVVSVL). Residues 126-127 (TK) are Extracellular-facing. A helical membrane pass occupies residues 128-148 (EYEDAVSIALAVLIVVTVGFI). Residues 149–229 (QEYRSEKSLE…EVEPCGKTDS (81 aa)) lie on the Cytoplasmic side of the membrane. Residues 230–250 (PLADGGDLSTLSNVVFMGTLV) form a helical membrane-spanning segment. The Extracellular portion of the chain corresponds to 251–291 (QCGKGQGVVIGTGEQSQFGEVFKMMRAEETPKTPLQKSMDK). Thr-262 is modified (phosphothreonine). Ser-266 carries the phosphoserine modification. The chain crosses the membrane as a helical span at residues 292 to 312 (LGKQLTIFSFGIIGLLMLVGW). Topologically, residues 313-329 (VQGKPFLSMFTVGVSLA) are cytoplasmic. 4 residues coordinate Ca(2+): Val-330, Ala-331, Ile-333, and Glu-335. Residues 330–350 (VAAIPEGLPIVVMVTLVLGVL) traverse the membrane as a helical segment. Residues 351–748 (RMAKKRVIVK…IAALSLITLS (398 aa)) are Extracellular-facing. Catalysis depends on Asp-377, which acts as the 4-aspartylphosphate intermediate. The Mg(2+) site is built by Asp-672 and Asp-676. Residues 749-769 (TVCNLPSPLNAMQILWVNIIM) traverse the membrane as a helical segment. Ca(2+) contacts are provided by Asn-766 and Asp-770. At 770–802 (DGPPAQSLGVEPVDRDALRRPPRSVGDTILNRA) the chain is on the cytoplasmic side. Residues 803–823 (LILRVLMSAAVIIGGTLFIFW) traverse the membrane as a helical segment. The Extracellular portion of the chain corresponds to 824–835 (REIPANGTSTPR). The chain crosses the membrane as a helical span at residues 836-853 (TTTMAFTCFVFFDLFNAL). The Cytoplasmic segment spans residues 854–872 (SCRSQTKLIFEIGFFRNRM). Residues 873–893 (FLYSVLGSLLGQLAVIYAPPL) traverse the membrane as a helical segment. The Extracellular segment spans residues 894–903 (QKVFQTENLS). The helical transmembrane segment at 904–924 (ALDLLLLTGLASSVFILSELL) threads the bilayer. The Cytoplasmic segment spans residues 925–944 (KLWEKFLSRARPTQMLPEAV).

This sequence belongs to the cation transport ATPase (P-type) (TC 3.A.3) family. Type IIA subfamily. As to quaternary structure, interacts (via N-terminus) with ORAI1 (via N- and C-termini); this interaction regulates Ca(2+) influx at the plasma membrane. In terms of tissue distribution, expressed in hippocampal neurons (at protein level). Expressed in lactating mammary epithelium (at protein level).

It is found in the golgi apparatus. The protein resides in the trans-Golgi network membrane. Its subcellular location is the cell membrane. The protein localises to the basolateral cell membrane. The catalysed reaction is Ca(2+)(in) + ATP + H2O = Ca(2+)(out) + ADP + phosphate + H(+). It catalyses the reaction Mn(2+)(in) + ATP + H2O = Mn(2+)(out) + ADP + phosphate + H(+). Functionally, ATP-driven pump that supplies the Golgi apparatus with Ca(2+) and Mn(2+) ions, both essential cofactors for processing and trafficking of newly synthesized proteins in the secretory pathway. Within a catalytic cycle, acquires Ca(2+) or Mn(2+) ions on the cytoplasmic side of the membrane and delivers them to the lumenal side. The transfer of ions across the membrane is coupled to ATP hydrolysis and is associated with a transient phosphorylation that shifts the pump conformation from inward-facing to outward-facing state. Induces Ca(2+) influx independently of its ATP-driven pump function. At the basolateral membrane of mammary epithelial cells, interacts with Ca(2+) channel ORAI1 and mediates Ca(2+) entry independently of the Ca(2+) content of endoplasmic reticulum or Golgi stores. May facilitate transepithelial transport of large quantities of Ca(2+) for milk secretion via activation of Ca(2+) influx channels at the plasma membrane and active Ca(2+) transport at the Golgi apparatus. This chain is Calcium-transporting ATPase type 2C member 2, found in Mus musculus (Mouse).